Reading from the N-terminus, the 41-residue chain is Photosystem I reaction center subunit IX (41 aa).

A helical transmembrane segment spans residues 7–27 (YLSTAPVLATLWFGLLAGILI).

It belongs to the PsaJ family.

Its subcellular location is the plastid. The protein resides in the chloroplast thylakoid membrane. Its function is as follows. May help in the organization of the PsaE and PsaF subunits. The protein is Photosystem I reaction center subunit IX of Chara vulgaris (Common stonewort).